A 743-amino-acid polypeptide reads, in one-letter code: Phosphoribosylformylglycinamidine synthase subunit PurL (743 aa).

Residue H50 is part of the active site. The ATP site is built by Y53 and K92. E94 provides a ligand contact to Mg(2+). Residues 95-98 and R117 each bind substrate; that span reads SHNH. H96 (proton acceptor) is an active-site residue. Residue D118 participates in Mg(2+) binding. Q241 lines the substrate pocket. Residue D269 coordinates Mg(2+). 313–315 contributes to the substrate binding site; that stretch reads ESQ. ATP contacts are provided by D494 and G531. N532 is a Mg(2+) binding site. Residue S534 participates in substrate binding.

Belongs to the FGAMS family. In terms of assembly, monomer. Part of the FGAM synthase complex composed of 1 PurL, 1 PurQ and 2 PurS subunits.

It is found in the cytoplasm. It carries out the reaction N(2)-formyl-N(1)-(5-phospho-beta-D-ribosyl)glycinamide + L-glutamine + ATP + H2O = 2-formamido-N(1)-(5-O-phospho-beta-D-ribosyl)acetamidine + L-glutamate + ADP + phosphate + H(+). It functions in the pathway purine metabolism; IMP biosynthesis via de novo pathway; 5-amino-1-(5-phospho-D-ribosyl)imidazole from N(2)-formyl-N(1)-(5-phospho-D-ribosyl)glycinamide: step 1/2. Part of the phosphoribosylformylglycinamidine synthase complex involved in the purines biosynthetic pathway. Catalyzes the ATP-dependent conversion of formylglycinamide ribonucleotide (FGAR) and glutamine to yield formylglycinamidine ribonucleotide (FGAM) and glutamate. The FGAM synthase complex is composed of three subunits. PurQ produces an ammonia molecule by converting glutamine to glutamate. PurL transfers the ammonia molecule to FGAR to form FGAM in an ATP-dependent manner. PurS interacts with PurQ and PurL and is thought to assist in the transfer of the ammonia molecule from PurQ to PurL. The sequence is that of Phosphoribosylformylglycinamidine synthase subunit PurL from Mesorhizobium japonicum (strain LMG 29417 / CECT 9101 / MAFF 303099) (Mesorhizobium loti (strain MAFF 303099)).